We begin with the raw amino-acid sequence, 273 residues long: Formamidopyrimidine-DNA glycosylase (273 aa).

P2 serves as the catalytic Schiff-base intermediate with DNA. E3 (proton donor) is an active-site residue. The Proton donor; for beta-elimination activity role is filled by K57. DNA is bound by residues H91, R110, and K151. The segment at 236-270 (QVYGRKDEACNDCGTIIEAKVIGQRNSYFCPHCQM) adopts an FPG-type zinc-finger fold. The active-site Proton donor; for delta-elimination activity is the R260.

Belongs to the FPG family. In terms of assembly, monomer. Requires Zn(2+) as cofactor.

It carries out the reaction Hydrolysis of DNA containing ring-opened 7-methylguanine residues, releasing 2,6-diamino-4-hydroxy-5-(N-methyl)formamidopyrimidine.. It catalyses the reaction 2'-deoxyribonucleotide-(2'-deoxyribose 5'-phosphate)-2'-deoxyribonucleotide-DNA = a 3'-end 2'-deoxyribonucleotide-(2,3-dehydro-2,3-deoxyribose 5'-phosphate)-DNA + a 5'-end 5'-phospho-2'-deoxyribonucleoside-DNA + H(+). Involved in base excision repair of DNA damaged by oxidation or by mutagenic agents. Acts as a DNA glycosylase that recognizes and removes damaged bases. Has a preference for oxidized purines, such as 7,8-dihydro-8-oxoguanine (8-oxoG). Has AP (apurinic/apyrimidinic) lyase activity and introduces nicks in the DNA strand. Cleaves the DNA backbone by beta-delta elimination to generate a single-strand break at the site of the removed base with both 3'- and 5'-phosphates. The polypeptide is Formamidopyrimidine-DNA glycosylase (Actinobacillus pleuropneumoniae serotype 3 (strain JL03)).